The following is a 74-amino-acid chain: uncharacterized protein (74 aa).

The helical transmembrane segment at 15–32 (FLHALTVTFLSDIFVWLV) threads the bilayer.

It is found in the membrane. This is an uncharacterized protein from Saccharomyces cerevisiae (strain ATCC 204508 / S288c) (Baker's yeast).